We begin with the raw amino-acid sequence, 404 residues long: Cysteine desulfurase IscS (404 aa).

Pyridoxal 5'-phosphate contacts are provided by residues 75–76 (AT), Asn155, Gln183, and 203–205 (SGH). At Lys206 the chain carries N6-(pyridoxal phosphate)lysine. Thr243 provides a ligand contact to pyridoxal 5'-phosphate. The active-site Cysteine persulfide intermediate is the Cys328. Cys328 contributes to the [2Fe-2S] cluster binding site.

It belongs to the class-V pyridoxal-phosphate-dependent aminotransferase family. NifS/IscS subfamily. Homodimer. Forms a heterotetramer with IscU, interacts with other sulfur acceptors. Pyridoxal 5'-phosphate is required as a cofactor.

It is found in the cytoplasm. The catalysed reaction is (sulfur carrier)-H + L-cysteine = (sulfur carrier)-SH + L-alanine. The protein operates within cofactor biosynthesis; iron-sulfur cluster biosynthesis. Master enzyme that delivers sulfur to a number of partners involved in Fe-S cluster assembly, tRNA modification or cofactor biosynthesis. Catalyzes the removal of elemental sulfur atoms from cysteine to produce alanine. Functions as a sulfur delivery protein for Fe-S cluster synthesis onto IscU, an Fe-S scaffold assembly protein, as well as other S acceptor proteins. This is Cysteine desulfurase IscS from Shewanella pealeana (strain ATCC 700345 / ANG-SQ1).